Here is a 403-residue protein sequence, read N- to C-terminus: Multifunctional CCA protein (403 aa).

The ATP site is built by glycine 8 and arginine 11. Glycine 8 and arginine 11 together coordinate CTP. Mg(2+) is bound by residues aspartate 21 and aspartate 23. ATP is bound by residues arginine 91, arginine 137, and arginine 140. 3 residues coordinate CTP: arginine 91, arginine 137, and arginine 140. The region spanning 228–329 (TGIHTLMVAK…LKVLGLLDVW (102 aa)) is the HD domain.

This sequence belongs to the tRNA nucleotidyltransferase/poly(A) polymerase family. Bacterial CCA-adding enzyme type 1 subfamily. In terms of assembly, monomer. Can also form homodimers and oligomers. Mg(2+) is required as a cofactor. It depends on Ni(2+) as a cofactor.

It catalyses the reaction a tRNA precursor + 2 CTP + ATP = a tRNA with a 3' CCA end + 3 diphosphate. It carries out the reaction a tRNA with a 3' CCA end + 2 CTP + ATP = a tRNA with a 3' CCACCA end + 3 diphosphate. Functionally, catalyzes the addition and repair of the essential 3'-terminal CCA sequence in tRNAs without using a nucleic acid template. Adds these three nucleotides in the order of C, C, and A to the tRNA nucleotide-73, using CTP and ATP as substrates and producing inorganic pyrophosphate. tRNA 3'-terminal CCA addition is required both for tRNA processing and repair. Also involved in tRNA surveillance by mediating tandem CCA addition to generate a CCACCA at the 3' terminus of unstable tRNAs. While stable tRNAs receive only 3'-terminal CCA, unstable tRNAs are marked with CCACCA and rapidly degraded. The chain is Multifunctional CCA protein from Vibrio cholerae serotype O1 (strain ATCC 39315 / El Tor Inaba N16961).